We begin with the raw amino-acid sequence, 608 residues long: Glutamine--fructose-6-phosphate aminotransferase [isomerizing] (608 aa).

Cys-2 acts as the Nucleophile; for GATase activity in catalysis. In terms of domain architecture, Glutamine amidotransferase type-2 spans 2–217 (CGIVGILGRG…DGDWAVLTRA (216 aa)). SIS domains lie at 284–423 (LPFD…ERGK) and 456–598 (LARY…VDQP). Lys-603 serves as the catalytic For Fru-6P isomerization activity.

It is found in the cytoplasm. The catalysed reaction is D-fructose 6-phosphate + L-glutamine = D-glucosamine 6-phosphate + L-glutamate. Its function is as follows. Involved in the production of the root hair deformation (HAD) factor specifically on soybean. This is Glutamine--fructose-6-phosphate aminotransferase [isomerizing] (nodM) from Bradyrhizobium diazoefficiens (strain JCM 10833 / BCRC 13528 / IAM 13628 / NBRC 14792 / USDA 110).